The primary structure comprises 969 residues: Lateral signaling target protein 2 homolog (969 aa).

A Glycyl lysine isopeptide (Lys-Gly) (interchain with G-Cter in ubiquitin) cross-link involves residue Lys87. 4 disordered regions span residues 290-323 (QDGE…GVEE), 336-360 (SVWK…EEPI), 390-437 (STLL…YHDD), and 715-777 (RSEC…DMSE). A compositionally biased stretch (polar residues) spans 295 to 310 (PTSSTNDPSASTGPDS). Over residues 336-346 (SVWKEEEEKQV) the composition is skewed to basic and acidic residues. Residues 391–402 (TLLSPPSQNQSP) are compositionally biased toward polar residues. Residues 411–423 (GSSLEGSSATSST) are compositionally biased toward low complexity. The segment covering 715-729 (RSECFGKQSKDDNRK) has biased composition (basic and acidic residues). Composition is skewed to low complexity over residues 732–745 (SSSQ…VPSS) and 756–769 (SLSS…VSSL). An FYVE-type zinc finger spans residues 899-959 (DEACNSCIAC…VCTHCYMFHV (61 aa)). The Zn(2+) site is built by Cys905, Cys908, Cys921, Cys924, Cys929, Cys932, Cys951, and Cys954.

This sequence belongs to the lst-2 family. In terms of processing, monoubiquitination at Lys-87 prevents binding to phosphatidylinositol 3-phosphate (PI3P) and localization to early endosome membranes.

The protein resides in the cytoplasm. The protein localises to the cytosol. It localises to the early endosome membrane. Its function is as follows. Negative regulator of epidermal growth factor receptor (EGFR) signaling. Acts by promoting EGFR degradation in endosomes when not monoubiquitinated. The protein is Lateral signaling target protein 2 homolog (zfyve28) of Danio rerio (Zebrafish).